The following is a 417-amino-acid chain: MTRLDSIERAVADIAAGKAVVVVDDEDRENEGDLIFAAEKATPELVAFMVRYTSGYLCVPLAGEDCDRLGLLPQYAVNQDKHGTAYTVTVDAKNGIGTGISASDRAATMRLLADAASTADDFTKPGHVVPLRAKDGGVLRRPGHTEASVDLAKLAGLRPAAVICEIVSQKDEGAMAQTEELRVFADEHNLALVSIADLIEWRRKHEKHVQRIAEARIPTQHGEFRAVGYTSIYDDVEHVALVLGDISGPDGDGNDVLVRVHSECLTGDVFGSRRCDCGPQLDAAMEMVAKEGRGIVLYMRGHEGRGIGLMHKLQAYQLQDAGEDTVDANLKLGLPADARDYGLGAQILVDLGVKSMRLLTNNPAKRVGLDGYGLHIIERVPLPVRANSENIRYLRTKRDRMGHDLADLDDHPEADGA.

The interval Met-1 to Lys-204 is DHBP synthase. D-ribulose 5-phosphate contacts are provided by residues Arg-28–Glu-29, Asp-33, Arg-141–Thr-145, and Glu-165. Glu-29 contacts Mg(2+). Residue His-144 coordinates Mg(2+). The segment at His-205–Ala-417 is GTP cyclohydrolase II. Residue Arg-259–Glu-263 coordinates GTP. Zn(2+) is bound by residues Cys-264, Cys-275, and Cys-277. GTP contacts are provided by residues Gln-280, Glu-303 to Arg-305, and Thr-325. Catalysis depends on Asp-337, which acts as the Proton acceptor; for GTP cyclohydrolase activity. Arg-339 serves as the catalytic Nucleophile; for GTP cyclohydrolase activity. GTP contacts are provided by Thr-360 and Lys-365.

It in the N-terminal section; belongs to the DHBP synthase family. In the C-terminal section; belongs to the GTP cyclohydrolase II family. Mg(2+) serves as cofactor. It depends on Mn(2+) as a cofactor. Requires Zn(2+) as cofactor.

The catalysed reaction is D-ribulose 5-phosphate = (2S)-2-hydroxy-3-oxobutyl phosphate + formate + H(+). It carries out the reaction GTP + 4 H2O = 2,5-diamino-6-hydroxy-4-(5-phosphoribosylamino)-pyrimidine + formate + 2 phosphate + 3 H(+). The protein operates within cofactor biosynthesis; riboflavin biosynthesis; 2-hydroxy-3-oxobutyl phosphate from D-ribulose 5-phosphate: step 1/1. It functions in the pathway cofactor biosynthesis; riboflavin biosynthesis; 5-amino-6-(D-ribitylamino)uracil from GTP: step 1/4. In terms of biological role, catalyzes the conversion of D-ribulose 5-phosphate to formate and 3,4-dihydroxy-2-butanone 4-phosphate. Catalyzes the conversion of GTP to 2,5-diamino-6-ribosylamino-4(3H)-pyrimidinone 5'-phosphate (DARP), formate and pyrophosphate. This is Riboflavin biosynthesis protein RibBA from Mycobacteroides abscessus (strain ATCC 19977 / DSM 44196 / CCUG 20993 / CIP 104536 / JCM 13569 / NCTC 13031 / TMC 1543 / L948) (Mycobacterium abscessus).